Consider the following 574-residue polypeptide: Peptidyl-prolyl cis-trans isomerase FKBP9 (574 aa).

Residues 1–26 form the signal peptide; that stretch reads MAIRARSWRPPPPPLLLLLLWVTGQA. PPIase FKBP-type domains follow at residues 58–146, 170–258, 282–369, and 393–481; these read GDFV…MDIW, SDFV…LDLH, GDFL…IDFH, and GDYL…LELV. 4 N-linked (GlcNAc...) asparagine glycosylation sites follow: Asn178, Asn290, Asn306, and Asn401. EF-hand domains lie at 492 to 527 and 537 to 572; these read WNGE…QVAS and DAEM…TKHD. Residues Asp505, Asp507, Asp509, Glu511, Glu516, Asp550, Asn552, Asp554, Lys556, and Glu561 each contribute to the Ca(2+) site. Residues 571-574 carry the Prevents secretion from ER motif; it reads HDEL.

In terms of processing, phosphorylated.

The protein localises to the endoplasmic reticulum. The enzyme catalyses [protein]-peptidylproline (omega=180) = [protein]-peptidylproline (omega=0). Inhibited by FK506. Its function is as follows. PPIases accelerate the folding of proteins during protein synthesis. The sequence is that of Peptidyl-prolyl cis-trans isomerase FKBP9 (FKBP9) from Bos taurus (Bovine).